Reading from the N-terminus, the 276-residue chain is Anamorsin homolog (276 aa).

Residues 1–152 (MEPYVVDNLN…TRGSSIKLPW (152 aa)) are N-terminal SAM-like domain. Positions 152-189 (WAHSDIEAAWENVDNETSYDVDKNLINTNSLLQKSDYV) are linker. The [2Fe-2S] cluster site is built by cysteine 195, cysteine 211, cysteine 214, and cysteine 216. The tract at residues 195–216 (CGQEFAKNSIGKRKRACKNCTC) is fe-S binding site A. The [4Fe-4S] cluster site is built by cysteine 237, cysteine 240, cysteine 248, and cysteine 251. 2 consecutive short sequence motifs (cx2C motif) follow at residues 237 to 240 (CGNC) and 248 to 251 (CSTC). A fe-S binding site B region spans residues 237–251 (CGNCYLGDAFRCSTC).

It belongs to the anamorsin family. Monomer. [2Fe-2S] cluster is required as a cofactor. It depends on [4Fe-4S] cluster as a cofactor.

It localises to the cytoplasm. The protein resides in the mitochondrion intermembrane space. In terms of biological role, component of the cytosolic iron-sulfur (Fe-S) protein assembly (CIA) machinery. Required for the maturation of extramitochondrial Fe-S proteins. Part of an electron transfer chain functioning in an early step of cytosolic Fe-S biogenesis, facilitating the de novo assembly of a [4Fe-4S] cluster on the cytosolic Fe-S scaffold complex. Electrons are transferred from NADPH via a FAD- and FMN-containing diflavin oxidoreductase. Together with the diflavin oxidoreductase, also required for the assembly of the diferric tyrosyl radical cofactor of ribonucleotide reductase (RNR), probably by providing electrons for reduction during radical cofactor maturation in the catalytic small subunit. This chain is Anamorsin homolog, found in Schistosoma japonicum (Blood fluke).